The sequence spans 804 residues: Tegument protein UL47 homolog (804 aa).

Residues 1 to 15 (MQSGHYNRRQSRRQR) show a composition bias toward basic residues. 2 disordered regions span residues 1–42 (MQSG…THPP) and 58–206 (LNSE…DYFS). Positions 11 to 31 (SRRQRISSNTTDSPRHTHGTR) match the Nuclear localization signal motif. Polar residues predominate over residues 32 to 42 (YRSTNWYTHPP). The span at 62-72 (MDQDSSSDASD) shows a compositional bias: acidic residues. Residues 82–93 (STYNGSEQNTST) are compositionally biased toward polar residues. Residues 94-109 (SRHENRIFKLTEREAN) are compositionally biased toward basic and acidic residues. Tandem repeats lie at residues 117 to 132 (DAIDDEGEAEEGEAEE), 133 to 148 (DAIDDEGEAEEGEAEE), and 149 to 164 (DAIDDEGEAEEGEAEE). The segment at 117 to 203 (DAIDDEGEAE…IDDEGEAEED (87 aa)) is 6 X 16 AA approximate tandem repeats. Residues 118 to 204 (AIDDEGEAEE…DDEGEAEEDY (87 aa)) show a composition bias toward acidic residues. One copy of the 1-4; truncated repeat lies at 170–180 (DAIDDEGEAEE). One copy of the 1-5; truncated repeat lies at 181–191 (DAIDDEGEAEE). One copy of the 1-6; truncated repeat lies at 192 to 203 (DAIDDEGEAEED). Positions 770–792 (QPIPSVDLAENLMQYRNEILGLD) match the Nuclear export signal motif.

This sequence belongs to the alphaherpesvirinae HHV-1 UL47 family. In terms of assembly, interacts with US3 kinase. Interacts with ORF24 and ORF27; these interactions seem important for efficient virion nuclear egress. Interacts with ORF17/VHS. Phosphorylated by US3. This phosphorylation is required for proper nuclear localization.

The protein resides in the virion tegument. It localises to the host nucleus. The protein localises to the host cytoplasm. Tegument protein that can bind to various RNA transcripts. Plays a role in the attenuation of selective viral and cellular mRNA degradation by modulating the activity of host shutoff RNase ORF17/VHS. Also plays a role in the primary envelopment of virions in the perinuclear space, probably by interacting with two nuclear egress proteins ORF24 and ORF27. This Varicella-zoster virus (strain Oka vaccine) (HHV-3) protein is Tegument protein UL47 homolog.